We begin with the raw amino-acid sequence, 294 residues long: NAD kinase (294 aa).

Aspartate 74 functions as the Proton acceptor in the catalytic mechanism. NAD(+)-binding positions include 74–75 (DG), arginine 79, 149–150 (NE), aspartate 179, 190–195 (TGYSMS), and alanine 214.

This sequence belongs to the NAD kinase family. A divalent metal cation serves as cofactor.

Its subcellular location is the cytoplasm. It catalyses the reaction NAD(+) + ATP = ADP + NADP(+) + H(+). Involved in the regulation of the intracellular balance of NAD and NADP, and is a key enzyme in the biosynthesis of NADP. Catalyzes specifically the phosphorylation on 2'-hydroxyl of the adenosine moiety of NAD to yield NADP. This is NAD kinase from Flavobacterium psychrophilum (strain ATCC 49511 / DSM 21280 / CIP 103535 / JIP02/86).